The chain runs to 223 residues: MEDVKLQFPSLPLCKEEAEDWTYPMRREMQEILPGLFLGPYSAAMKSKLSVLQKCGITHVICIRQNIEANFIKPNFQQLFRYLVLDIADNPVENIIRFFLTSKEFIDGCLQTGGKVLIHGNAGISRSAALVIAYIMETFGIKYRDAFTYVQERRFCINPNAGFVHQLQEYEAIYLAKLTIKMMSPLQLGRPLCIQSGSTGSLKRTLDDEDELGNMQVSAAHEG.

The region spanning 28–176 (EMQEILPGLF…LQEYEAIYLA (149 aa)) is the Tyrosine-protein phosphatase domain.

The protein belongs to the protein-tyrosine phosphatase family. Non-receptor class subfamily.

Functionally, catalytically inactive phosphatase. The polypeptide is Serine/threonine/tyrosine-interacting protein B (styx-b) (Xenopus laevis (African clawed frog)).